A 411-amino-acid polypeptide reads, in one-letter code: Tyrosine--tRNA ligase (411 aa).

Residue Tyr33 coordinates L-tyrosine. A 'HIGH' region motif is present at residues 38-47; sequence PTADSLHLGN. Tyr160 and Gln164 together coordinate L-tyrosine. The 'KMSKS' region motif lies at 222 to 226; it reads KFGKS. Lys225 is an ATP binding site. Positions 346–410 constitute an S4 RNA-binding domain; sequence VNLVNFLVEN…GKKKILICKV (65 aa).

This sequence belongs to the class-I aminoacyl-tRNA synthetase family. TyrS type 1 subfamily. As to quaternary structure, homodimer.

It localises to the cytoplasm. It carries out the reaction tRNA(Tyr) + L-tyrosine + ATP = L-tyrosyl-tRNA(Tyr) + AMP + diphosphate + H(+). Functionally, catalyzes the attachment of tyrosine to tRNA(Tyr) in a two-step reaction: tyrosine is first activated by ATP to form Tyr-AMP and then transferred to the acceptor end of tRNA(Tyr). This is Tyrosine--tRNA ligase from Mycoplasmopsis synoviae (strain 53) (Mycoplasma synoviae).